The primary structure comprises 155 residues: Ribosome maturation factor RimP (155 aa).

This sequence belongs to the RimP family.

It localises to the cytoplasm. Functionally, required for maturation of 30S ribosomal subunits. The protein is Ribosome maturation factor RimP of Bacteroides thetaiotaomicron (strain ATCC 29148 / DSM 2079 / JCM 5827 / CCUG 10774 / NCTC 10582 / VPI-5482 / E50).